We begin with the raw amino-acid sequence, 49 residues long: Astexin-2 (49 aa).

The propeptide occupies 1 to 25 (MTKRTTIAARRVGLIDLGKATRQTK). Residues 26 to 34 (GLTQIQALD) constitute a cross-link (isoaspartyl glycine isopeptide (Gly-Asp)).

In terms of processing, this lasso peptide is hydrolyzed to a linear form by the isopeptidase AtxE2, in vitro. The isopeptidase AtxE2 only recognizes the threaded form (but not the unthreaded form).

It is found in the cytoplasm. The protein resides in the secreted. Functionally, shows weak antimicrobial activity against its phylogenetic relative Caulobacter crescentus. Does not show activity against other bacteria tested (E.coli, Vibrio sp, Burkhoderia thailandensis, and Salmonella newport). This Asticcacaulis excentricus (strain ATCC 15261 / DSM 4724 / KCTC 12464 / NCIMB 9791 / VKM B-1370 / CB 48) protein is Astexin-2.